The primary structure comprises 120 residues: Large ribosomal subunit protein bL17 (120 aa).

The protein belongs to the bacterial ribosomal protein bL17 family. In terms of assembly, part of the 50S ribosomal subunit. Contacts protein L32.

The sequence is that of Large ribosomal subunit protein bL17 from Bacillus licheniformis (strain ATCC 14580 / DSM 13 / JCM 2505 / CCUG 7422 / NBRC 12200 / NCIMB 9375 / NCTC 10341 / NRRL NRS-1264 / Gibson 46).